Consider the following 277-residue polypeptide: MGIRSYKAYTPGTRNRSVSQFEEIVQSKPEKQLTSGQHRKKGRNNRGVITSRHRGGGHKRLYRHIDFKRDKYGMLGRIVSIEYDPNRNARICLISYQDGEKRYILHPRGISIGDQILSDTHAPISPGNALPLTNMPLGTTIHNIELQPGKGGQVARAAGAIAKIIAKEGKFATLRLPSGEVRLVLQQCLATIGQVGNVDANNQSIGKAGSKRWLGRRPTVRGVVMNAADHPHGGGEGRAPIGRKRPLTPWGRPTLGRKSRSRHKYSEALILRRRKNA.

2 disordered regions span residues 24–57 and 226–266; these read IVQSKPEKQLTSGQHRKKGRNNRGVITSRHRGGG and NAAD…HKYS.

Belongs to the universal ribosomal protein uL2 family. Part of the 50S ribosomal subunit.

The protein resides in the plastid. Its subcellular location is the chloroplast. The sequence is that of Large ribosomal subunit protein uL2c (rpl2) from Zygnema circumcarinatum (Green alga).